Consider the following 807-residue polypeptide: MPKQDSLWLKSLRWIQKHLVHTIVVPQDPFADLNLDASRPLAYVMKTESLSDIAALSEITTKLGLPSPYEPLVVNGVVAPRVVCLEGRKPLFGERASNEPFLECFMRLLAVHKEKPELDIQLVPVSLYWGRTPGKEDDTMKAAVLERENPTWLRKCLMILFLGRHNFVQFSNAVSLRYMADEHGTDMGIAHKLARVARVHFRRQRKVMTGPVLPNRQAMFHSLLKSESLRKAIQEEAASKKISETQARETAIEYLDEIAANYSDSLVRIAERFLTWLWNKLYSGINIKGAEQIRQLHHDGHEIVYVPCHRSHMDYLLLSYILYYQGMVPPHIAAGINLNFWPAGPLFRRGGAFFIRRSFNGNKLYTAVFREYLDQLFAKGYSVEYFSEGGRSRTGRLLAPKTGMIAMTINSVLRGIERPVTLVPVYLGYDHVMEVATYHKELSGKKKQKESVWQVFGAIRKLGNFGQGYVNFGEPITLQNFLNETAPNWRAEVADDPEQKPTWLTPAVNVLANRVMTRINDAAAASSITLTSLVLLASEQNALERCLLERQLDLYLTLLKRVPYTSFTSVAEGDGKHLVQQGLELNKFSINADPLGEIVSIDANQAISMTYYRNNIIHLFIIPSLIASCLTNNKQISRAHILGIVSDFYPLLKAELFMGIKDLPSYVNQVLDLFIEQGLVQESDTLSVVTEHTSQMLLLAGSVSETLQRYAIIFNLLAHRPKMERSELESESHLLAQRLGALHGITAPEFYDKKLYNTLSVKLKELGYFSEKEDKSDVERIRDQANSLLRASVRQTIVASVTAEHIV.

The HXXXXD motif motif lies at 308–313; sequence CHRSHM.

It belongs to the GPAT/DAPAT family.

Its subcellular location is the cell inner membrane. The enzyme catalyses sn-glycerol 3-phosphate + an acyl-CoA = a 1-acyl-sn-glycero-3-phosphate + CoA. It participates in phospholipid metabolism; CDP-diacylglycerol biosynthesis; CDP-diacylglycerol from sn-glycerol 3-phosphate: step 1/3. The chain is Glycerol-3-phosphate acyltransferase from Shewanella sp. (strain MR-4).